Consider the following 613-residue polypeptide: Portal protein (613 aa).

Residues 577–613 (ATGGDHGIRQAPSARGDAEPDHAKSKPARDPPPGAGS) are disordered. A compositionally biased stretch (basic and acidic residues) spans 592-605 (GDAEPDHAKSKPAR).

This sequence belongs to the herpesviridae portal protein family. In terms of assembly, homododecamerizes. Interacts with terminase subunits TRM1 and TRM3.

The protein localises to the virion. It is found in the host nucleus. Its function is as follows. Forms a portal in the viral capsid through which viral DNA is translocated during DNA packaging. Assembles as a dodecamer at a single fivefold axe of the T=16 icosahedric capsid. Binds to the molecular motor that translocates the viral DNA, termed terminase. The chain is Portal protein from Homo sapiens (Human).